Here is an 85-residue protein sequence, read N- to C-terminus: HssA/B-like protein 62 (85 aa).

The protein belongs to the hssA/B family.

The protein is HssA/B-like protein 62 (hssl62) of Dictyostelium discoideum (Social amoeba).